We begin with the raw amino-acid sequence, 306 residues long: Polyadenylate-binding protein 2 (306 aa).

The segment covering 1–12 (MAAAAAAAAAAG) has biased composition (low complexity). The segment at 1–115 (MAAAAAAAAA…EGDPGDGAIE (115 aa)) is disordered. Ala-2 is subject to N-acetylalanine. The interaction with SKIP stretch occupies residues 2 to 145 (AAAAAAAAAA…LKELQNEVEK (144 aa)). Arg-17 is subject to Omega-N-methylarginine. Residue Ser-19 is modified to Phosphoserine. Positions 30–47 (GAGGEAGEGAPGGAGDYG) are enriched in gly residues. Over residues 51–72 (ESEELEPEELLLEPEPEPEPEE) the composition is skewed to acidic residues. Phosphoserine is present on Ser-52. A compositionally biased stretch (pro residues) spans 77-87 (PRAPPGAPGPG). A coiled-coil region spans residues 115–151 (EDPELEAIKARVREMEEEAEKLKELQNEVEKQMNMSP). The tract at residues 119 to 147 (LEAIKARVREMEEEAEKLKELQNEVEKQM) is stimulates PAPOLA. 2 positions are modified to phosphoserine: Ser-150 and Ser-235. Residues 155–306 (NAGPVIMSIE…ARATSWYSPY (152 aa)) form a necessary for homooligomerization region. In terms of domain architecture, RRM spans 172–249 (RSIYVGNVDY…RQIKVIPKRT (78 aa)). Asymmetric dimethylarginine; alternate is present on residues Arg-238, Arg-259, and Arg-263. Residues Arg-238, Arg-259, and Arg-263 each carry the omega-N-methylarginine; alternate modification. Asymmetric dimethylarginine is present on residues Arg-265, Arg-267, Arg-269, Arg-277, Arg-279, Arg-287, Arg-289, Arg-291, Arg-294, Arg-296, and Arg-298. An interaction with PAPOLA region spans residues 286–306 (SRPRGRVYRGRARATSWYSPY).

As to quaternary structure, monomer and homooligomer. Binds RNA as a monomer and oligomerizes when bound to poly(A). Associates in a ternary complex with CPSF4 and NS/NS1 and interaction with NS/NS1, blocks nuclear export of host cell mRNAs. Associates in a single complex with SKIP and MYOD1 and interacts with SKIP in differentiated myocytes. Interacts with NUDT21/CPSF5. Identified in a IGF2BP1-dependent mRNP granule complex containing untranslated mRNAs. Interacts with PAPOLA, but only in presence of oligo(A) RNA. Interacts with transportin. May interact with SETX. Interacts (via RRM domain and C-terminal arginine-rich region) with ZFP36 (via hypophosphorylated form); this interaction occurs in the nucleus in a RNA-independent manner, decreases in presence of single-stranded poly(A) RNA-oligomer and in a p38-dependent-manner and may down-regulated RNA poly(A) polymerase activity. Component of the poly(A) tail exosome targeting (PAXT) complex composed of PABPN1, ZFC3H1 and MTREX. Interacts with ZFC3H1 in a RNase-insensitive manner. Interacts with FRG1. Interacts with ZC3H11A. In terms of processing, arginine dimethylation is asymmetric and involves PRMT1 and PRMT3. It does not influence the RNA binding properties. As to expression, ubiquitous.

It localises to the nucleus. The protein localises to the cytoplasm. The protein resides in the nucleus speckle. Its function is as follows. Involved in the 3'-end formation of mRNA precursors (pre-mRNA) by the addition of a poly(A) tail of 200-250 nt to the upstream cleavage product. Stimulates poly(A) polymerase (PAPOLA) conferring processivity on the poly(A) tail elongation reaction and also controls the poly(A) tail length. Increases the affinity of poly(A) polymerase for RNA. Is also present at various stages of mRNA metabolism including nucleocytoplasmic trafficking and nonsense-mediated decay (NMD) of mRNA. Cooperates with SKIP to synergistically activate E-box-mediated transcription through MYOD1 and may regulate the expression of muscle-specific genes. Binds to poly(A) and to poly(G) with high affinity. May protect the poly(A) tail from degradation. Subunit of the trimeric poly(A) tail exosome targeting (PAXT) complex, a complex that directs a subset of long and polyadenylated poly(A) RNAs for exosomal degradation. The RNA exosome is fundamental for the degradation of RNA in eukaryotic nuclei. Substrate targeting is facilitated by its cofactor MTREX, which links to RNA-binding protein adapters. This is Polyadenylate-binding protein 2 (PABPN1) from Bos taurus (Bovine).